The primary structure comprises 327 residues: D-alanine--D-alanine ligase (327 aa).

One can recognise an ATP-grasp domain in the interval 113–312 (KRLWMTYGLA…YEDFVMQVVA (200 aa)). 139–194 (AADLGLPLIVKPAREGSSIGLTKVTAADQMRAAFEKAAALDNDVIAETFIDGAELT) is a binding site for ATP. Positions 266, 279, and 281 each coordinate Mg(2+).

Belongs to the D-alanine--D-alanine ligase family. The cofactor is Mg(2+). Mn(2+) is required as a cofactor.

The protein resides in the cytoplasm. It carries out the reaction 2 D-alanine + ATP = D-alanyl-D-alanine + ADP + phosphate + H(+). The protein operates within cell wall biogenesis; peptidoglycan biosynthesis. Cell wall formation. The polypeptide is D-alanine--D-alanine ligase (Cupriavidus necator (strain ATCC 17699 / DSM 428 / KCTC 22496 / NCIMB 10442 / H16 / Stanier 337) (Ralstonia eutropha)).